We begin with the raw amino-acid sequence, 241 residues long: Small ribosomal subunit protein uS2 (241 aa).

It belongs to the universal ribosomal protein uS2 family.

This is Small ribosomal subunit protein uS2 from Pectobacterium carotovorum subsp. carotovorum (strain PC1).